A 108-amino-acid chain; its full sequence is Competence protein ComGC (108 aa).

Residues 1 to 13 form the signal peptide; sequence MKKMMTFLKKAKV. Residues 14–39 form a may be involved in polymerization of ComGC region; that stretch reads KAFTLVEMLVVLLIISVLFLLFVPNL. Phe-16 carries the post-translational modification N-methylphenylalanine. The chain crosses the membrane as a helical span at residues 16–36; that stretch reads FTLVEMLVVLLIISVLFLLFV.

It belongs to the ComGC family. The transformation pili are flexible filaments, consisting mainly of the major pilin ComGC and smaller amounts of the minor pilins, including at least ComGD, ComGF and ComGG, and perhaps ComGE. Homodimer. Forms higher-order multimers. Interacts with ComGG; the interaction is probably direct. Post-translationally, undergoes proteolytic cleavage.

It localises to the cell membrane. The protein resides in the cell surface. Its subcellular location is the fimbrium. The protein localises to the secreted. Functionally, major component of the type IV-like pilus (T4P) that plays a role in transformation. Transformation pili are dynamically extended and retracted, perhaps thereby promoting DNA uptake and transformation. Required for transformation. Required for DNA binding. This chain is Competence protein ComGC, found in Streptococcus pneumoniae serotype 4 (strain ATCC BAA-334 / TIGR4).